Here is a 195-residue protein sequence, read N- to C-terminus: Protein LIGHT-DEPENDENT SHORT HYPOCOTYLS 4 (195 aa).

The span at 28 to 38 (TTTSSSSSSSS) shows a compositional bias: low complexity. Disordered stretches follow at residues 28–51 (TTTS…RYEN) and 162–195 (SQAK…SSPN). An ALOG domain is found at 48 to 175 (RYENQKRRDW…ARGISYEKKK (128 aa)). The Nuclear localization signal signature appears at 173 to 177 (KKKRK).

This sequence belongs to the plant homeotic and developmental regulators ALOG protein family. Induced by NAC054/CUC1 and NAC098/CUC2 in shoot organ boundary cells.

The protein localises to the nucleus. Probable transcription regulator that acts as a developmental regulator by promoting cell growth in response to light. May suppress organ differentiation in the boundary region. In Arabidopsis thaliana (Mouse-ear cress), this protein is Protein LIGHT-DEPENDENT SHORT HYPOCOTYLS 4 (LSH4).